A 425-amino-acid polypeptide reads, in one-letter code: MRPVDLLIVGAGELVTMAGGPRRGERMKDAAVIPGGALAARDGRIVAVGPEDEVLRTVETGPDTRVIDARGRAVIPGFVDPHTHLCFAGDRAEEFALRLGGATYQEIAARGGGILETVRATRAASQAELVELGLARLDQLALNGTTTVEVKSGYGLSLADELKQLRAIRAMARRHPLTVVPTFMGAHEVPPEYRSRREAYVDLLVEEMLPAVAAEPGLARFADVFTEAGVFSVAESRRILERAKALGFGVKVHADELSDLGGAALAAELGAISAEHLLHASDEALAKLAEAGTVAVCLPGTSFCLMNAPYARARRMIELGCTVALGSDYNPGSCPAYAMPFIITLACMHLGLNPSEALAAATINAAAAIGMEAEVGSLEVGKLADVVILSTPTHWHIPYHMGMGVVAKVVKRGRLIVDEGKVRRR.

Fe(3+) contacts are provided by H82 and H84. Zn(2+) is bound by residues H82 and H84. 4-imidazolone-5-propanoate is bound by residues R91, Y154, and H187. Y154 contributes to the N-formimidoyl-L-glutamate binding site. H253 is a Fe(3+) binding site. H253 provides a ligand contact to Zn(2+). E256 contacts 4-imidazolone-5-propanoate. D328 provides a ligand contact to Fe(3+). D328 provides a ligand contact to Zn(2+). N-formimidoyl-L-glutamate-binding residues include N330 and G332. Residue S333 coordinates 4-imidazolone-5-propanoate.

This sequence belongs to the metallo-dependent hydrolases superfamily. HutI family. It depends on Zn(2+) as a cofactor. Requires Fe(3+) as cofactor.

The protein resides in the cytoplasm. It carries out the reaction 4-imidazolone-5-propanoate + H2O = N-formimidoyl-L-glutamate. Its pathway is amino-acid degradation; L-histidine degradation into L-glutamate; N-formimidoyl-L-glutamate from L-histidine: step 3/3. In terms of biological role, catalyzes the hydrolytic cleavage of the carbon-nitrogen bond in imidazolone-5-propanoate to yield N-formimidoyl-L-glutamate. It is the third step in the universal histidine degradation pathway. The protein is Imidazolonepropionase of Symbiobacterium thermophilum (strain DSM 24528 / JCM 14929 / IAM 14863 / T).